The chain runs to 266 residues: Orotidine 5'-phosphate decarboxylase (266 aa).

Substrate is bound by residues aspartate 38, 60–62 (KTH), 92–101 (DRKFADIGNT), tyrosine 218, and arginine 236. The active-site Proton donor is the lysine 94.

It belongs to the OMP decarboxylase family.

It carries out the reaction orotidine 5'-phosphate + H(+) = UMP + CO2. It participates in pyrimidine metabolism; UMP biosynthesis via de novo pathway; UMP from orotate: step 2/2. The protein is Orotidine 5'-phosphate decarboxylase (URA3) of Candida maltosa (Yeast).